A 130-amino-acid polypeptide reads, in one-letter code: Methylglyoxal synthase (130 aa).

In terms of domain architecture, MGS-like spans 1–130; the sequence is MSKPRIALIA…DLARNMQDVC (130 aa). Substrate is bound by residues histidine 11, lysine 15, 37 to 40, and 57 to 58; these read TGTT and SG. Aspartate 63 functions as the Proton donor/acceptor in the catalytic mechanism. Residue histidine 90 participates in substrate binding.

The protein belongs to the methylglyoxal synthase family.

The catalysed reaction is dihydroxyacetone phosphate = methylglyoxal + phosphate. Its function is as follows. Catalyzes the formation of methylglyoxal from dihydroxyacetone phosphate. This Burkholderia orbicola (strain AU 1054) protein is Methylglyoxal synthase.